Here is a 1375-residue protein sequence, read N- to C-terminus: Ubiquitin carboxyl-terminal hydrolase 47 (1375 aa).

Residue Lys122 is modified to N6-acetyllysine. Residues Val188 to Lys564 enclose the USP domain. Residue Cys197 is the Nucleophile of the active site. Positions Asp425–Asn452 are disordered. Over residues Gln430–Asn452 the composition is skewed to polar residues. The active-site Proton acceptor is the His503. A Phosphoserine modification is found at Ser832. Disordered regions lie at residues Thr840–Val859, Leu880–Ser968, and Asn983–Lys1024. The span at Ser882–Ser899 shows a compositional bias: low complexity. Ser910 is subject to Phosphoserine. Residues Leu912–Gln928 are compositionally biased toward basic and acidic residues. Polar residues predominate over residues His929–Phe938. At Ser933 the chain carries Phosphoserine. Basic and acidic residues predominate over residues Ser940–Asn950. A compositionally biased stretch (low complexity) spans Ser953–Ser968. The span at Lys997–Trp1006 shows a compositional bias: basic and acidic residues. The segment covering Asp1007–Asp1020 has biased composition (acidic residues). The residue at position 1013 (Ser1013) is a Phosphoserine. Residue Thr1015 is modified to Phosphothreonine. Ser1017 is subject to Phosphoserine.

It belongs to the peptidase C19 family. In terms of assembly, interacts with BTRC and FBXW11. Interacts with POLB. Expressed in skeletal muscle, heart and testis.

It is found in the cytoplasm. The enzyme catalyses Thiol-dependent hydrolysis of ester, thioester, amide, peptide and isopeptide bonds formed by the C-terminal Gly of ubiquitin (a 76-residue protein attached to proteins as an intracellular targeting signal).. In terms of biological role, ubiquitin-specific protease that specifically deubiquitinates monoubiquitinated DNA polymerase beta (POLB), stabilizing POLB thereby playing a role in base-excision repair (BER). Acts as a regulator of cell growth and genome integrity. May also indirectly regulate CDC25A expression at a transcriptional level. The protein is Ubiquitin carboxyl-terminal hydrolase 47 (USP47) of Homo sapiens (Human).